Reading from the N-terminus, the 294-residue chain is MQVEVFKVKLSDLLCLTKPKQTFLLLLTSIFTYVGAGGMRLDALLLLTAAMLLSISGTTSVNMALDADIDAMMPRTKDRPVPSGRVSRVEALSFGLLLFIVGLGLSYLINPWTAFATSLGMAFDILVYTMWTKRRTPLSIIFGGVAGAAPSLAGWAAARGSIELQAIMIALITILWIPSHIWYISIYYLDDYAAARVPMAPVVWGIERTSKLIVASNVLMIILQLLLFLMGPLGPIFLVLSLPITLRFLIHSIRYARSPSRGEARRMYKVASPVEGVIFLAIALDGIFRILWSS.

8 consecutive transmembrane segments (helical) span residues 19–39 (PKQT…AGGM), 41–61 (LDAL…TTSV), 89–109 (VEAL…SYLI), 111–131 (PWTA…YTMW), 138–158 (LSII…WAAA), 166–186 (AIMI…YISI), 218–238 (VLMI…PIFL), and 272–292 (SPVE…RILW).

It belongs to the UbiA prenyltransferase family. Protoheme IX farnesyltransferase subfamily.

The protein resides in the cell membrane. It catalyses the reaction heme b + (2E,6E)-farnesyl diphosphate + H2O = Fe(II)-heme o + diphosphate. It functions in the pathway porphyrin-containing compound metabolism; heme O biosynthesis; heme O from protoheme: step 1/1. In terms of biological role, converts heme B (protoheme IX) to heme O by substitution of the vinyl group on carbon 2 of heme B porphyrin ring with a hydroxyethyl farnesyl side group. In Korarchaeum cryptofilum (strain OPF8), this protein is Protoheme IX farnesyltransferase.